Here is a 583-residue protein sequence, read N- to C-terminus: Membrane protein insertase YidC (583 aa).

The chain crosses the membrane as a helical span at residues 5-25 (SVTGLALIALIMIVWLQFMSP). A disordered region spans residues 28–50 (KSVQPDNRPKAQTTATVSQEKTE). A compositionally biased stretch (polar residues) spans 37-46 (KAQTTATVSQ). The next 5 helical transmembrane spans lie at 341–361 (PFAE…ISNY), 362–382 (GLII…LSMA), 427–447 (LGGC…FYVF), 477–497 (IPVY…TVFI), and 515–535 (LYIF…GLGL).

Belongs to the OXA1/ALB3/YidC family. Type 1 subfamily. In terms of assembly, interacts with the Sec translocase complex via SecD. Specifically interacts with transmembrane segments of nascent integral membrane proteins during membrane integration.

The protein resides in the cell inner membrane. Required for the insertion and/or proper folding and/or complex formation of integral membrane proteins into the membrane. Involved in integration of membrane proteins that insert both dependently and independently of the Sec translocase complex, as well as at least some lipoproteins. Aids folding of multispanning membrane proteins. The polypeptide is Membrane protein insertase YidC (Chlorobium limicola (strain DSM 245 / NBRC 103803 / 6330)).